The chain runs to 262 residues: MSNKKLIINADDFGYTPAVTQGIIEAHKRGVVTSTTALPTSPYFLEAMESARISAPTLAIGVHLTLTLNQAKPILPREMVPSLVDEAGYFWHQSIFEEKVNLEEVYNEWDAQIISFMKSGRRPDHIDSHHNVHGKNKKLLGVALALARKYQLPLRNASRSIETKDYLELYQDVRTPDEMLYQFYDKAISTETILQLLDMVVCSEGEVFEINCHPAFIDTILQNQSGYCMPRIREVEILTSQEVKEAIEERGILLANYESLAM.

H129 contributes to the Mg(2+) binding site.

Belongs to the YdjC deacetylase family. Homodimer. Mg(2+) serves as cofactor.

Functionally, probably catalyzes the deacetylation of acetylated carbohydrates an important step in the degradation of oligosaccharides. This chain is Carbohydrate deacetylase, found in Enterococcus faecalis (strain ATCC 700802 / V583).